Consider the following 868-residue polypeptide: LPS-assembly protein LptD (868 aa).

An N-terminal signal peptide occupies residues 1–24 (MLKGIHKYLLMCFGTVLFTVQANA).

This sequence belongs to the LptD family. As to quaternary structure, component of the lipopolysaccharide transport and assembly complex. Interacts with LptE and LptA.

The protein resides in the cell outer membrane. Together with LptE, is involved in the assembly of lipopolysaccharide (LPS) at the surface of the outer membrane. In Francisella tularensis subsp. holarctica (strain LVS), this protein is LPS-assembly protein LptD.